We begin with the raw amino-acid sequence, 625 residues long: Isocitrate dehydrogenase kinase/phosphatase (625 aa).

Residues 325–331 and Lys346 each bind ATP; that span reads APGIKGM. Asp381 is an active-site residue. The interval 596–625 is disordered; that stretch reads RRHSPGRNDHELLTHLPPEPMLTGLSGMTP.

The protein belongs to the AceK family.

The protein resides in the cytoplasm. The catalysed reaction is L-seryl-[isocitrate dehydrogenase] + ATP = O-phospho-L-seryl-[isocitrate dehydrogenase] + ADP + H(+). Its function is as follows. Bifunctional enzyme which can phosphorylate or dephosphorylate isocitrate dehydrogenase (IDH) on a specific serine residue. This is a regulatory mechanism which enables bacteria to bypass the Krebs cycle via the glyoxylate shunt in response to the source of carbon. When bacteria are grown on glucose, IDH is fully active and unphosphorylated, but when grown on acetate or ethanol, the activity of IDH declines drastically concomitant with its phosphorylation. The chain is Isocitrate dehydrogenase kinase/phosphatase from Polaromonas sp. (strain JS666 / ATCC BAA-500).